Reading from the N-terminus, the 403-residue chain is Octaketide synthase 2 (403 aa).

Cys-174 is a catalytic residue. CoA is bound by residues Ser-281 and 318–321 (GGRA).

The protein belongs to the thiolase-like superfamily. Chalcone/stilbene synthases family. In terms of assembly, homodimer.

The protein operates within secondary metabolite biosynthesis; flavonoid biosynthesis. In terms of biological role, catalyzes the iterative condensations of 8 molecules of malonyl-CoA to produce aromatic octaketides, SEK4 and SEK4b, the products of the minimal polyketide synthase for the benzoisochromanequinone actinorhodin. May be involved in the biosynthesis of the octaketide barbaloin. This chain is Octaketide synthase 2 (PKS4), found in Aloe arborescens (Kidachi aloe).